We begin with the raw amino-acid sequence, 260 residues long: Small ribosomal subunit protein uS3 (260 aa).

A KH type-2 domain is found at 39–114 (LRQYIEQKLG…QIRINVVEVQ (76 aa)). Positions 218-260 (QEVATPPPSPRDRDRDRGDRDREPRRRQQQRRRQQFEDRSNEG) are disordered. Basic and acidic residues-rich tracts occupy residues 227 to 243 (PRDR…EPRR) and 251 to 260 (QQFEDRSNEG).

Belongs to the universal ribosomal protein uS3 family. In terms of assembly, part of the 30S ribosomal subunit. Forms a tight complex with proteins S10 and S14.

Functionally, binds the lower part of the 30S subunit head. Binds mRNA in the 70S ribosome, positioning it for translation. This chain is Small ribosomal subunit protein uS3, found in Nostoc sp. (strain PCC 7120 / SAG 25.82 / UTEX 2576).